Consider the following 255-residue polypeptide: MSSIGTGYDLSASTFSPDGRVFQVEYAMKAVENSSTAIGIRCKDGVVFGVEKLVLSKLYEEGSNKRLFNVDRHVGMAVAGLLADARSLADIAREEASNFRSNFGYNIPLKHLADRVAMYVHAYTLYSAVRPFGCSFMLGSYSANDGAQLYMIDPSGVSYGYWGCAIGKARQAAKTEIEKLQMKEMTCRDVVKEVAKIIYIVHDEVKDKAFELELSWVGELTKGRHEIVPKDIREEAEKYAKESLKEEDESDDDNM.

The residue at position 2 (serine 2) is an N-acetylserine. N6-acetyllysine is present on residues lysine 57, lysine 206, and lysine 230. A phosphoserine mark is found at serine 243 and serine 250.

The protein belongs to the peptidase T1A family. As to quaternary structure, the 26S proteasome consists of a 20S proteasome core and two 19S regulatory subunits. The 20S proteasome core is a barrel-shaped complex made of 28 subunits that are arranged in four stacked rings. The two outer rings are each formed by seven alpha subunits, and the two inner rings are formed by seven beta subunits. The proteolytic activity is exerted by three beta-subunits PSMB5, PSMB6 and PSMB7. Interacts with AURKB. Interacts with CDKN1A. Interacts with MDM2 and RB1. Interacts with the C-terminus of TBXA2R isoform 2. Interacts with DNAJB2. In terms of tissue distribution, detected in liver (at protein level).

It localises to the cytoplasm. Its subcellular location is the nucleus. Its function is as follows. Component of the 20S core proteasome complex involved in the proteolytic degradation of most intracellular proteins. This complex plays numerous essential roles within the cell by associating with different regulatory particles. Associated with two 19S regulatory particles, forms the 26S proteasome and thus participates in the ATP-dependent degradation of ubiquitinated proteins. The 26S proteasome plays a key role in the maintenance of protein homeostasis by removing misfolded or damaged proteins that could impair cellular functions, and by removing proteins whose functions are no longer required. Associated with the PA200 or PA28, the 20S proteasome mediates ubiquitin-independent protein degradation. This type of proteolysis is required in several pathways including spermatogenesis (20S-PA200 complex) or generation of a subset of MHC class I-presented antigenic peptides (20S-PA28 complex). Binds to the C-terminus of CDKN1A and thereby mediates its degradation. Negatively regulates the membrane trafficking of the cell-surface thromboxane A2 receptor (TBXA2R) isoform 2. The polypeptide is Proteasome subunit alpha type-3 (Psma3) (Mus musculus (Mouse)).